Consider the following 374-residue polypeptide: Aminomethyltransferase (374 aa).

It belongs to the GcvT family. As to quaternary structure, the glycine cleavage system is composed of four proteins: P, T, L and H.

It carries out the reaction N(6)-[(R)-S(8)-aminomethyldihydrolipoyl]-L-lysyl-[protein] + (6S)-5,6,7,8-tetrahydrofolate = N(6)-[(R)-dihydrolipoyl]-L-lysyl-[protein] + (6R)-5,10-methylene-5,6,7,8-tetrahydrofolate + NH4(+). Its function is as follows. The glycine cleavage system catalyzes the degradation of glycine. The polypeptide is Aminomethyltransferase (Prochlorococcus marinus (strain MIT 9303)).